Consider the following 315-residue polypeptide: Protein ADP-ribosyltransferase (315 aa).

Positions 13–299 constitute a Deacetylase sirtuin-type domain; that stretch reads LMDEKTKQAE…TTALRNDSTT (287 aa). NAD(+) is bound by residues alanine 40, 123–126, and glutamine 143; that span reads TNAD. Zn(2+)-binding residues include cysteine 151, cysteine 155, cysteine 186, and cysteine 189. NAD(+) contacts are provided by residues 238–240, asparagine 264, tyrosine 268, and isoleucine 285; that span reads YTT.

This sequence belongs to the sirtuin family. Class M subfamily. It depends on Zn(2+) as a cofactor.

The catalysed reaction is L-aspartyl-[protein] + NAD(+) = 4-O-(ADP-D-ribosyl)-L-aspartyl-[protein] + nicotinamide. With respect to regulation, is inhibited by Tenovin-6 in vitro, but not by nicotinamide. Catalyzes specifically the mono-ADP-ribosylation of GcvH-L (SAV0324). This activity is dependent on prior lipoylation of the target protein. May be involved in the modulation of the response to host-derived oxidative stress. In contrast to other sirtuin classes, lacks protein deacylase activity, being unable to catalyze delipoylation, debiotinylation, deacetylation and desuccinylation of proteins. This chain is Protein ADP-ribosyltransferase, found in Staphylococcus aureus (strain Mu50 / ATCC 700699).